The following is a 338-amino-acid chain: Fusarubin cluster-specific transcription factor fsr6 (338 aa).

The segment at residues cysteine 16–cysteine 44 is a DNA-binding region (zn(2)-C6 fungal-type).

It is found in the nucleus. Transcription factor that regulates the expression of the gene cluster that mediates the biosynthesis of fusarubins, highly pigmented naphthoquinones responsible for the coloration of the fruiting bodies. The protein is Fusarubin cluster-specific transcription factor fsr6 of Gibberella fujikuroi (strain CBS 195.34 / IMI 58289 / NRRL A-6831) (Bakanae and foot rot disease fungus).